Reading from the N-terminus, the 587-residue chain is Phosphomethylpyrimidine synthase (587 aa).

The tract at residues Met1–Leu58 is disordered. The segment covering Ile17–Asp33 has biased composition (basic and acidic residues). Residues Asn180, Met209, Tyr238, His274, Ser294–Gly296, Asp335–Arg338, and Glu374 contribute to the substrate site. His378 lines the Zn(2+) pocket. Residue Tyr401 coordinates substrate. A Zn(2+)-binding site is contributed by His442. 3 residues coordinate [4Fe-4S] cluster: Cys522, Cys525, and Cys530.

This sequence belongs to the ThiC family. The cofactor is [4Fe-4S] cluster.

It carries out the reaction 5-amino-1-(5-phospho-beta-D-ribosyl)imidazole + S-adenosyl-L-methionine = 4-amino-2-methyl-5-(phosphooxymethyl)pyrimidine + CO + 5'-deoxyadenosine + formate + L-methionine + 3 H(+). The protein operates within cofactor biosynthesis; thiamine diphosphate biosynthesis. Functionally, catalyzes the synthesis of the hydroxymethylpyrimidine phosphate (HMP-P) moiety of thiamine from aminoimidazole ribotide (AIR) in a radical S-adenosyl-L-methionine (SAM)-dependent reaction. The chain is Phosphomethylpyrimidine synthase from Corynebacterium glutamicum (strain ATCC 13032 / DSM 20300 / JCM 1318 / BCRC 11384 / CCUG 27702 / LMG 3730 / NBRC 12168 / NCIMB 10025 / NRRL B-2784 / 534).